The sequence spans 229 residues: MAKLVFIRHGQSEWNLSNQFTGWVDVNLSEEGVRQAQNAGALLKKEGILFDQAYTSVLTRAIKTLHYALEGSDQLWIPETKSWRLNERHYGALQGQNKAEAAEKWGDEQVHIWRRSYDTLPPLLDASDEGSAANDRRYAHLDPKAIPGGENLKVTLERVIPFWEDEIAPKLIDGQNIIVAAHGNSLRALTKYIENISDEDIMDVEMATGEPVVYDLDENLNVVSKKKLN.

Substrate contacts are provided by residues 8–15 (RHGQSEWN), 21–22 (TG), Arg-60, 87–90 (ERHY), Lys-98, 114–115 (RR), and 183–184 (GN). Residue His-9 is the Tele-phosphohistidine intermediate of the active site. Residue Glu-87 is the Proton donor/acceptor of the active site.

Belongs to the phosphoglycerate mutase family. BPG-dependent PGAM subfamily.

The enzyme catalyses (2R)-2-phosphoglycerate = (2R)-3-phosphoglycerate. It participates in carbohydrate degradation; glycolysis; pyruvate from D-glyceraldehyde 3-phosphate: step 3/5. Its function is as follows. Catalyzes the interconversion of 2-phosphoglycerate and 3-phosphoglycerate. This is 2,3-bisphosphoglycerate-dependent phosphoglycerate mutase 2 from Latilactobacillus sakei subsp. sakei (strain 23K) (Lactobacillus sakei subsp. sakei).